The following is a 336-amino-acid chain: PHD finger protein 11 (336 aa).

The interval 1-20 is disordered; the sequence is MAEETAPPCGPVSTGGSLSP. A C2HC pre-PHD-type zinc finger spans residues 25–61; it reads KRTCALCPDGHEWSVIYFAPSANIAAHENCLLYSSGL. The PHD-type zinc finger occupies 91–143; it reads LKCSLCNKGGATVGCDLSSCRKSYHYVCAKKDHAIPQVDEDLGTYKIFCPEHP. 2 disordered regions span residues 139–179 and 303–336; these read CPEH…KKMK and DPSG…GDSL. The segment covering 303-314 has biased composition (low complexity); the sequence is DPSGSTSGSLLP.

Interacts with BRCA1 and RELA.

It localises to the nucleus. Its function is as follows. Positive regulator of Th1-type cytokine gene expression. In Rattus norvegicus (Rat), this protein is PHD finger protein 11 (Phf11).